The following is a 494-amino-acid chain: Glutamate--tRNA ligase (494 aa).

The 'HIGH' region signature appears at 9–19 (PSPTGPLHIGS). A 'KMSKS' region motif is present at residues 249–253 (KLSKR). Lysine 252 serves as a coordination point for ATP.

It belongs to the class-I aminoacyl-tRNA synthetase family. Glutamate--tRNA ligase type 1 subfamily. Monomer.

It is found in the cytoplasm. The enzyme catalyses tRNA(Glu) + L-glutamate + ATP = L-glutamyl-tRNA(Glu) + AMP + diphosphate. Catalyzes the attachment of glutamate to tRNA(Glu) in a two-step reaction: glutamate is first activated by ATP to form Glu-AMP and then transferred to the acceptor end of tRNA(Glu). This chain is Glutamate--tRNA ligase, found in Azobacteroides pseudotrichonymphae genomovar. CFP2.